Reading from the N-terminus, the 209-residue chain is Cilia- and flagella-associated protein 418 (209 aa).

The interval 1-76 (MAKDLDELLD…LINEIFEEPD (76 aa)) is required for interaction with FAM161A. Positions 24-58 (LDLGERPKGDGGGGSHSGDRNGAQEKETLRSTETF) are disordered. The segment covering 40–58 (SGDRNGAQEKETLRSTETF) has biased composition (basic and acidic residues).

In terms of assembly, interacts (via N-terminus) with FAM161A (via central region); the interaction is direct. Expressed in multiple tissues, including the brain, kidney, lung, spleen, heart, trachea and testis. Expressed in the retina (at protein level).

It is found in the cytoplasm. Its subcellular location is the photoreceptor inner segment. Its function is as follows. May be involved in photoreceptor outer segment disk morphogenesis. This chain is Cilia- and flagella-associated protein 418, found in Mus musculus (Mouse).